The following is a 202-amino-acid chain: MIGYLEGRVVARRDRFAIVLTPGGVGYELELPTPVAAALPAPGGQVSLFVHTVVREDALELFGFASLDDRETFRTLIGISKLGPRTALAILSHFTADDLLRVVASGDAEALVRVPGIGKKSAQRIFIELSYKLEGRAPAAGLAPSVPIPGGVAGDVVAGLTNLGYPEPEARQVAAEVLEAEPDLDVAAALRQALKRLASAKK.

Residues 1–65 are domain I; it reads MIGYLEGRVV…EDALELFGFA (65 aa). The tract at residues 66–144 is domain II; sequence SLDDRETFRT…GRAPAAGLAP (79 aa). The segment at 145-155 is flexible linker; it reads SVPIPGGVAGD. Residues 155 to 202 form a domain III region; sequence DVVAGLTNLGYPEPEARQVAAEVLEAEPDLDVAAALRQALKRLASAKK.

The protein belongs to the RuvA family. In terms of assembly, homotetramer. Forms an RuvA(8)-RuvB(12)-Holliday junction (HJ) complex. HJ DNA is sandwiched between 2 RuvA tetramers; dsDNA enters through RuvA and exits via RuvB. An RuvB hexamer assembles on each DNA strand where it exits the tetramer. Each RuvB hexamer is contacted by two RuvA subunits (via domain III) on 2 adjacent RuvB subunits; this complex drives branch migration. In the full resolvosome a probable DNA-RuvA(4)-RuvB(12)-RuvC(2) complex forms which resolves the HJ.

It is found in the cytoplasm. Functionally, the RuvA-RuvB-RuvC complex processes Holliday junction (HJ) DNA during genetic recombination and DNA repair, while the RuvA-RuvB complex plays an important role in the rescue of blocked DNA replication forks via replication fork reversal (RFR). RuvA specifically binds to HJ cruciform DNA, conferring on it an open structure. The RuvB hexamer acts as an ATP-dependent pump, pulling dsDNA into and through the RuvAB complex. HJ branch migration allows RuvC to scan DNA until it finds its consensus sequence, where it cleaves and resolves the cruciform DNA. This chain is Holliday junction branch migration complex subunit RuvA, found in Solidesulfovibrio magneticus (strain ATCC 700980 / DSM 13731 / RS-1) (Desulfovibrio magneticus).